The chain runs to 379 residues: Glutamate 5-kinase (379 aa).

Lysine 19 lines the ATP pocket. Residues serine 59, aspartate 146, and asparagine 158 each contribute to the substrate site. Residues 178–179 (TD) and 220–226 (TGGMATK) each bind ATP. Residues 285–363 (SGDIIIDDGA…KDIISILGHD (79 aa)) enclose the PUA domain.

This sequence belongs to the glutamate 5-kinase family.

The protein resides in the cytoplasm. The catalysed reaction is L-glutamate + ATP = L-glutamyl 5-phosphate + ADP. It participates in amino-acid biosynthesis; L-proline biosynthesis; L-glutamate 5-semialdehyde from L-glutamate: step 1/2. Its function is as follows. Catalyzes the transfer of a phosphate group to glutamate to form L-glutamate 5-phosphate. The chain is Glutamate 5-kinase from Vibrio campbellii (strain ATCC BAA-1116).